A 496-amino-acid chain; its full sequence is Galactose-1-phosphate uridylyltransferase (496 aa).

This sequence belongs to the galactose-1-phosphate uridylyltransferase type 2 family.

It localises to the cytoplasm. The catalysed reaction is alpha-D-galactose 1-phosphate + UDP-alpha-D-glucose = alpha-D-glucose 1-phosphate + UDP-alpha-D-galactose. Its pathway is carbohydrate metabolism; galactose metabolism. In Staphylococcus saprophyticus subsp. saprophyticus (strain ATCC 15305 / DSM 20229 / NCIMB 8711 / NCTC 7292 / S-41), this protein is Galactose-1-phosphate uridylyltransferase.